An 877-amino-acid chain; its full sequence is Alanine--tRNA ligase (877 aa).

Positions 563, 567, 665, and 669 each coordinate Zn(2+).

Belongs to the class-II aminoacyl-tRNA synthetase family. Zn(2+) serves as cofactor.

It localises to the cytoplasm. It catalyses the reaction tRNA(Ala) + L-alanine + ATP = L-alanyl-tRNA(Ala) + AMP + diphosphate. Its function is as follows. Catalyzes the attachment of alanine to tRNA(Ala) in a two-step reaction: alanine is first activated by ATP to form Ala-AMP and then transferred to the acceptor end of tRNA(Ala). Also edits incorrectly charged Ser-tRNA(Ala) and Gly-tRNA(Ala) via its editing domain. The chain is Alanine--tRNA ligase from Thermoanaerobacter pseudethanolicus (strain ATCC 33223 / 39E) (Clostridium thermohydrosulfuricum).